A 146-amino-acid polypeptide reads, in one-letter code: Single-stranded DNA-binding protein 1-A, mitochondrial (146 aa).

The N-terminal 17 residues, 1 to 17 (MFHRPALQVFRQFARCQ), are a transit peptide targeting the mitochondrion. In terms of domain architecture, SSB spans 28-140 (INKVQLLGRV…IIADNIIFLS (113 aa)).

In terms of assembly, homotetramer.

The protein localises to the mitochondrion. It localises to the mitochondrion matrix. Its subcellular location is the mitochondrion nucleoid. Binds preferentially and cooperatively to pyrimidine rich single-stranded DNA (ss-DNA). Required to maintain the copy number of mitochondrial DNA (mtDNA) and plays crucial roles during mtDNA replication that stimulate activity of the DNA polymerase at the replication fork. May also function in mtDNA repair. In Xenopus laevis (African clawed frog), this protein is Single-stranded DNA-binding protein 1-A, mitochondrial (ssbp1-a).